The sequence spans 259 residues: Phosphatidylglycerol--prolipoprotein diacylglyceryl transferase (259 aa).

4 helical membrane passes run 12–32 (LAIH…VYLA), 41–61 (ISSD…IVGA), 80–100 (IIAI…GALV), and 109–129 (VLNP…AQAI). Arg-131 contacts a 1,2-diacyl-sn-glycero-3-phospho-(1'-sn-glycerol). Helical transmembrane passes span 167 to 187 (IPTF…IMMW), 194 to 214 (LLDG…RLVI), and 226 to 246 (GIRI…IFVI).

Belongs to the Lgt family.

The protein localises to the cell membrane. The catalysed reaction is L-cysteinyl-[prolipoprotein] + a 1,2-diacyl-sn-glycero-3-phospho-(1'-sn-glycerol) = an S-1,2-diacyl-sn-glyceryl-L-cysteinyl-[prolipoprotein] + sn-glycerol 1-phosphate + H(+). The protein operates within protein modification; lipoprotein biosynthesis (diacylglyceryl transfer). Catalyzes the transfer of the diacylglyceryl group from phosphatidylglycerol to the sulfhydryl group of the N-terminal cysteine of a prolipoprotein, the first step in the formation of mature lipoproteins. This Streptococcus pyogenes serotype M3 (strain ATCC BAA-595 / MGAS315) protein is Phosphatidylglycerol--prolipoprotein diacylglyceryl transferase.